Here is a 294-residue protein sequence, read N- to C-terminus: NAD kinase (294 aa).

Asp-74 (proton acceptor) is an active-site residue. NAD(+)-binding positions include 74–75 (DG), 148–149 (NE), His-159, Arg-176, Asp-178, 189–194 (TAYSLS), and Gln-249.

It belongs to the NAD kinase family. Requires a divalent metal cation as cofactor.

It is found in the cytoplasm. It catalyses the reaction NAD(+) + ATP = ADP + NADP(+) + H(+). Its function is as follows. Involved in the regulation of the intracellular balance of NAD and NADP, and is a key enzyme in the biosynthesis of NADP. Catalyzes specifically the phosphorylation on 2'-hydroxyl of the adenosine moiety of NAD to yield NADP. The protein is NAD kinase of Vibrio cholerae serotype O1 (strain ATCC 39541 / Classical Ogawa 395 / O395).